Here is a 640-residue protein sequence, read N- to C-terminus: RAP domain-containing protein, chloroplastic (640 aa).

The N-terminal 32 residues, 1–32 (MEAALLRPPPLAARGGVSIAIAFSVSRLPSAA), are a transit peptide targeting the chloroplast. The segment at 111-158 (SLQRMVASPKKKNKKKKSKKTNLKQKKAAEPKPPRDTDDDEDDEEEAD) is disordered. Residues 119-136 (PKKKNKKKKSKKTNLKQK) are compositionally biased toward basic residues. The span at 137-146 (KAAEPKPPRD) shows a compositional bias: basic and acidic residues. The segment covering 147-158 (TDDDEDDEEEAD) has biased composition (acidic residues). One can recognise an RAP domain in the interval 575 to 633 (LAFEIDGPSHFSRNLGTPLGHTAFKRRYIAAAGWNLVSLSHQEWENLEGEFEQLEYLRR).

Expressed in roots, leaf sheaths, veins of leaf blade, mature leaves, endodermis of culm, panicles and anthers.

The protein resides in the plastid. Its subcellular location is the chloroplast. In terms of biological role, probable RNA-binding protein that plays an essential role in chloroplast development. Regulates the ribosomal proteins homeostasis and ribosomal RNA development in chloroplasts. Involved the regulation of 16S rRNA and required for the expression of chloroplast-associated photosynthetic genes. The protein is RAP domain-containing protein, chloroplastic of Oryza sativa subsp. japonica (Rice).